The primary structure comprises 812 residues: Probable inorganic carbon transporter subunit DabA (812 aa).

4 residues coordinate Zn(2+): C339, D341, H501, and C516.

This sequence belongs to the inorganic carbon transporter (TC 9.A.2) DabA family. Forms a complex with DabB. Requires Zn(2+) as cofactor.

It localises to the cell inner membrane. Part of an energy-coupled inorganic carbon pump. This chain is Probable inorganic carbon transporter subunit DabA, found in Xanthomonas axonopodis pv. citri (strain 306).